A 501-amino-acid chain; its full sequence is Glycerol kinase (501 aa).

Thr12 serves as a coordination point for ADP. ATP contacts are provided by Thr12, Thr13, and Ser14. A sn-glycerol 3-phosphate-binding site is contributed by Thr12. Arg16 provides a ligand contact to ADP. Sn-glycerol 3-phosphate is bound by residues Arg82, Glu83, Tyr135, and Asp244. Glycerol-binding residues include Arg82, Glu83, Tyr135, Asp244, and Gln245. 4 residues coordinate ADP: Thr266, Gly309, Gly409, and Asn413. Positions 266, 309, and 409 each coordinate ATP.

The protein belongs to the FGGY kinase family.

The catalysed reaction is glycerol + ATP = sn-glycerol 3-phosphate + ADP + H(+). Its pathway is polyol metabolism; glycerol degradation via glycerol kinase pathway; sn-glycerol 3-phosphate from glycerol: step 1/1. With respect to regulation, inhibited by fructose 1,6-bisphosphate (FBP). Its function is as follows. Key enzyme in the regulation of glycerol uptake and metabolism. Catalyzes the phosphorylation of glycerol to yield sn-glycerol 3-phosphate. The protein is Glycerol kinase of Coxiella burnetii (strain RSA 331 / Henzerling II).